The sequence spans 582 residues: 2-(3-amino-3-carboxypropyl)histidine synthase subunit 2 (582 aa).

[4Fe-4S] cluster contacts are provided by cysteine 145, cysteine 166, and cysteine 398.

The protein belongs to the DPH1/DPH2 family. DPH2 subfamily. As to quaternary structure, component of the 2-(3-amino-3-carboxypropyl)histidine synthase complex composed of DPH1, DPH2, DPH3 and a NADH-dependent reductase, predominantly CBR1. [4Fe-4S] cluster serves as cofactor.

It is found in the cytoplasm. It participates in protein modification; peptidyl-diphthamide biosynthesis. In terms of biological role, required for the first step of diphthamide biosynthesis, a post-translational modification of histidine which occurs in elongation factor 2. DPH1 and DPH2 transfer a 3-amino-3-carboxypropyl (ACP) group from S-adenosyl-L-methionine (SAM) to a histidine residue, the reaction is assisted by a reduction system comprising DPH3 and a NADH-dependent reductase, predominantly CBR1. Facilitates the reduction of the catalytic iron-sulfur cluster found in the DPH1 subunit. This Eremothecium gossypii (strain ATCC 10895 / CBS 109.51 / FGSC 9923 / NRRL Y-1056) (Yeast) protein is 2-(3-amino-3-carboxypropyl)histidine synthase subunit 2 (DPH2).